The sequence spans 586 residues: Tetratricopeptide repeat protein 39B (586 aa).

TPR repeat units follow at residues 292 to 325, 483 to 516, and 524 to 557; these read SIILFYAARIDILKGRFEQAQETFQKCIVSQQEW, CLVQLLKGVCLKHLGRLLQAELCFNQVIQSEKRV, and PFTFYELGLLYKEQGDRDKAIRYIETAKGNYKDY.

The protein belongs to the TTC39 family.

In terms of biological role, may be involved in lipid metabolism. The chain is Tetratricopeptide repeat protein 39B (ttc39b) from Xenopus laevis (African clawed frog).